The chain runs to 169 residues: Probable chorismate pyruvate-lyase (169 aa).

Substrate is bound by residues Arg71, Ile110, and Glu150.

It belongs to the UbiC family.

The protein resides in the cytoplasm. The enzyme catalyses chorismate = 4-hydroxybenzoate + pyruvate. It participates in cofactor biosynthesis; ubiquinone biosynthesis. Its function is as follows. Removes the pyruvyl group from chorismate, with concomitant aromatization of the ring, to provide 4-hydroxybenzoate (4HB) for the ubiquinone pathway. The chain is Probable chorismate pyruvate-lyase from Acinetobacter baumannii (strain ATCC 17978 / DSM 105126 / CIP 53.77 / LMG 1025 / NCDC KC755 / 5377).